The sequence spans 360 residues: Aminomethyltransferase (360 aa).

It belongs to the GcvT family. The glycine cleavage system is composed of four proteins: P, T, L and H.

It carries out the reaction N(6)-[(R)-S(8)-aminomethyldihydrolipoyl]-L-lysyl-[protein] + (6S)-5,6,7,8-tetrahydrofolate = N(6)-[(R)-dihydrolipoyl]-L-lysyl-[protein] + (6R)-5,10-methylene-5,6,7,8-tetrahydrofolate + NH4(+). In terms of biological role, the glycine cleavage system catalyzes the degradation of glycine. The chain is Aminomethyltransferase from Legionella pneumophila subsp. pneumophila (strain Philadelphia 1 / ATCC 33152 / DSM 7513).